The primary structure comprises 201 residues: ATP-dependent Clp protease proteolytic subunit 1 (201 aa).

The Nucleophile role is filled by Ser102. The active site involves His127.

Belongs to the peptidase S14 family. In terms of assembly, fourteen ClpP subunits assemble into 2 heptameric rings which stack back to back to give a disk-like structure with a central cavity, resembling the structure of eukaryotic proteasomes.

Its subcellular location is the cytoplasm. The enzyme catalyses Hydrolysis of proteins to small peptides in the presence of ATP and magnesium. alpha-casein is the usual test substrate. In the absence of ATP, only oligopeptides shorter than five residues are hydrolyzed (such as succinyl-Leu-Tyr-|-NHMec, and Leu-Tyr-Leu-|-Tyr-Trp, in which cleavage of the -Tyr-|-Leu- and -Tyr-|-Trp bonds also occurs).. Functionally, cleaves peptides in various proteins in a process that requires ATP hydrolysis. Has a chymotrypsin-like activity. Plays a major role in the degradation of misfolded proteins. The protein is ATP-dependent Clp protease proteolytic subunit 1 of Mesorhizobium japonicum (strain LMG 29417 / CECT 9101 / MAFF 303099) (Mesorhizobium loti (strain MAFF 303099)).